The following is a 239-amino-acid chain: 3-dehydroquinate dehydratase (239 aa).

3-dehydroquinate is bound by residues 35–37 (ELR) and R70. H133 (proton donor/acceptor) is an active-site residue. The active-site Schiff-base intermediate with substrate is K160. R202 and Q225 together coordinate 3-dehydroquinate.

The protein belongs to the type-I 3-dehydroquinase family. Homodimer.

The catalysed reaction is 3-dehydroquinate = 3-dehydroshikimate + H2O. The protein operates within metabolic intermediate biosynthesis; chorismate biosynthesis; chorismate from D-erythrose 4-phosphate and phosphoenolpyruvate: step 3/7. Its function is as follows. Involved in the third step of the chorismate pathway, which leads to the biosynthesis of aromatic amino acids. Catalyzes the cis-dehydration of 3-dehydroquinate (DHQ) and introduces the first double bond of the aromatic ring to yield 3-dehydroshikimate. In Staphylococcus saprophyticus subsp. saprophyticus (strain ATCC 15305 / DSM 20229 / NCIMB 8711 / NCTC 7292 / S-41), this protein is 3-dehydroquinate dehydratase.